Here is a 148-residue protein sequence, read N- to C-terminus: UPF0178 protein BH16190 (148 aa).

This sequence belongs to the UPF0178 family.

This chain is UPF0178 protein BH16190, found in Bartonella henselae (strain ATCC 49882 / DSM 28221 / CCUG 30454 / Houston 1) (Rochalimaea henselae).